Reading from the N-terminus, the 255-residue chain is Protein PH0439 (255 aa).

Belongs to the CinA family.

This Pyrococcus horikoshii (strain ATCC 700860 / DSM 12428 / JCM 9974 / NBRC 100139 / OT-3) protein is Protein PH0439.